The chain runs to 688 residues: Methionine--tRNA ligase (688 aa).

The short motif at 13–23 (PYANGQIHIGH) is the 'HIGH' region element. Positions 144, 147, 157, and 160 each coordinate Zn(2+). The short motif at 335–339 (KMSKS) is the 'KMSKS' region element. Lys338 serves as a coordination point for ATP. In terms of domain architecture, tRNA-binding spans 582–688 (DFAKIDLRVA…SGAVPGMRIG (107 aa)).

It belongs to the class-I aminoacyl-tRNA synthetase family. MetG type 1 subfamily. Homodimer. Zn(2+) serves as cofactor.

The protein localises to the cytoplasm. It carries out the reaction tRNA(Met) + L-methionine + ATP = L-methionyl-tRNA(Met) + AMP + diphosphate. Is required not only for elongation of protein synthesis but also for the initiation of all mRNA translation through initiator tRNA(fMet) aminoacylation. The chain is Methionine--tRNA ligase from Cupriavidus pinatubonensis (strain JMP 134 / LMG 1197) (Cupriavidus necator (strain JMP 134)).